Reading from the N-terminus, the 320-residue chain is Methylenetetrahydrofolate dehydrogenase [NAD(+)] (320 aa).

Residue cysteine 150 is part of the active site. NAD(+) is bound by residues 185-186 (RS), 208-209 (DV), and 274-276 (FAC).

The protein belongs to the tetrahydrofolate dehydrogenase/cyclohydrolase family. Homodimer. In terms of processing, the N-terminus is blocked.

Its subcellular location is the cytoplasm. It localises to the nucleus. It carries out the reaction (6R)-5,10-methylene-5,6,7,8-tetrahydrofolate + NAD(+) = (6R)-5,10-methenyltetrahydrofolate + NADH. Functionally, catalyzes oxidation of cytoplasmic one-carbon units for purine biosynthesis. The chain is Methylenetetrahydrofolate dehydrogenase [NAD(+)] (MTD1) from Saccharomyces cerevisiae (strain ATCC 204508 / S288c) (Baker's yeast).